Reading from the N-terminus, the 307-residue chain is Probable GTP 3',8-cyclase (307 aa).

Positions 5 to 227 constitute a Radical SAM core domain; it reads AYGRRISSLR…RRTKYYLGGA (223 aa). Arg-14 is a binding site for GTP. [4Fe-4S] cluster contacts are provided by Cys-21 and Cys-25. Position 27 (Tyr-27) interacts with S-adenosyl-L-methionine. [4Fe-4S] cluster is bound at residue Cys-28. Lys-61 is a binding site for GTP. Gly-65 is a binding site for S-adenosyl-L-methionine. Position 89 (Thr-89) interacts with GTP. Residue Ser-113 coordinates S-adenosyl-L-methionine. Residue Lys-151 participates in GTP binding. Residues Cys-241 and Cys-244 each coordinate [4Fe-4S] cluster. 246 to 248 serves as a coordination point for GTP; sequence RLR. Position 258 (Cys-258) interacts with [4Fe-4S] cluster.

The protein belongs to the radical SAM superfamily. MoaA family. It depends on [4Fe-4S] cluster as a cofactor.

It carries out the reaction GTP + AH2 + S-adenosyl-L-methionine = (8S)-3',8-cyclo-7,8-dihydroguanosine 5'-triphosphate + 5'-deoxyadenosine + L-methionine + A + H(+). The protein operates within cofactor biosynthesis; molybdopterin biosynthesis. Functionally, catalyzes the cyclization of GTP to (8S)-3',8-cyclo-7,8-dihydroguanosine 5'-triphosphate. In Methanocella arvoryzae (strain DSM 22066 / NBRC 105507 / MRE50), this protein is Probable GTP 3',8-cyclase.